We begin with the raw amino-acid sequence, 453 residues long: Serine--tRNA ligase (453 aa).

252–254 (TAE) serves as a coordination point for L-serine. ATP contacts are provided by residues 283 to 285 (RKE) and Val299. L-serine is bound at residue Glu306. Residue 370–373 (EMVS) participates in ATP binding. An L-serine-binding site is contributed by Thr405.

This sequence belongs to the class-II aminoacyl-tRNA synthetase family. Type-1 seryl-tRNA synthetase subfamily. Homodimer. The tRNA molecule binds across the dimer.

It is found in the cytoplasm. The enzyme catalyses tRNA(Ser) + L-serine + ATP = L-seryl-tRNA(Ser) + AMP + diphosphate + H(+). It catalyses the reaction tRNA(Sec) + L-serine + ATP = L-seryl-tRNA(Sec) + AMP + diphosphate + H(+). Its pathway is aminoacyl-tRNA biosynthesis; selenocysteinyl-tRNA(Sec) biosynthesis; L-seryl-tRNA(Sec) from L-serine and tRNA(Sec): step 1/1. Catalyzes the attachment of serine to tRNA(Ser). Is also able to aminoacylate tRNA(Sec) with serine, to form the misacylated tRNA L-seryl-tRNA(Sec), which will be further converted into selenocysteinyl-tRNA(Sec). The protein is Serine--tRNA ligase of Sulfurisphaera tokodaii (strain DSM 16993 / JCM 10545 / NBRC 100140 / 7) (Sulfolobus tokodaii).